The chain runs to 394 residues: Phosphoglycerate kinase (394 aa).

Substrate-binding positions include D21–N23, R36, H59–R62, R118, and R151. A Phosphoserine modification is found at S183. K201 is an ATP binding site. T299 carries the phosphothreonine modification. ATP is bound by residues E323 and G350–S353.

It belongs to the phosphoglycerate kinase family. As to quaternary structure, monomer.

It localises to the cytoplasm. It catalyses the reaction (2R)-3-phosphoglycerate + ATP = (2R)-3-phospho-glyceroyl phosphate + ADP. It functions in the pathway carbohydrate degradation; glycolysis; pyruvate from D-glyceraldehyde 3-phosphate: step 2/5. In Geobacillus sp. (strain WCH70), this protein is Phosphoglycerate kinase.